Consider the following 430-residue polypeptide: Dihydroorotase (430 aa).

Histidine 61 and histidine 63 together coordinate Zn(2+). Substrate is bound by residues 63 to 65 (HLR) and asparagine 95. Zn(2+)-binding residues include aspartate 153, histidine 180, and histidine 233. Asparagine 279 is a binding site for substrate. A Zn(2+)-binding site is contributed by aspartate 306. Residue aspartate 306 is part of the active site. Residues histidine 310 and 324–325 (FG) each bind substrate.

Belongs to the metallo-dependent hydrolases superfamily. DHOase family. Class I DHOase subfamily. Zn(2+) is required as a cofactor.

The enzyme catalyses (S)-dihydroorotate + H2O = N-carbamoyl-L-aspartate + H(+). It participates in pyrimidine metabolism; UMP biosynthesis via de novo pathway; (S)-dihydroorotate from bicarbonate: step 3/3. Catalyzes the reversible cyclization of carbamoyl aspartate to dihydroorotate. The chain is Dihydroorotase from Lactiplantibacillus plantarum (strain ATCC BAA-793 / NCIMB 8826 / WCFS1) (Lactobacillus plantarum).